The primary structure comprises 658 residues: Glycogen debranching enzyme (658 aa).

The active-site Nucleophile is D336. Catalysis depends on E371, which acts as the Proton donor. Residues 459-486 (EANGEENRDGTNSNYSDNNGKEGLGGPL) are disordered.

This sequence belongs to the glycosyl hydrolase 13 family.

It carries out the reaction Hydrolysis of (1-&gt;6)-alpha-D-glucosidic linkages to branches with degrees of polymerization of three or four glucose residues in limit dextrin.. Its pathway is glycan degradation; glycogen degradation. Its function is as follows. Removes maltotriose and maltotetraose chains that are attached by 1,6-alpha-linkage to the limit dextrin main chain, generating a debranched limit dextrin. In Salmonella gallinarum (strain 287/91 / NCTC 13346), this protein is Glycogen debranching enzyme.